Consider the following 433-residue polypeptide: UDP-N-acetylmuramate--L-alanine ligase (433 aa).

Residue 108–114 participates in ATP binding; that stretch reads GAHGKTS.

It belongs to the MurCDEF family.

It localises to the cytoplasm. It carries out the reaction UDP-N-acetyl-alpha-D-muramate + L-alanine + ATP = UDP-N-acetyl-alpha-D-muramoyl-L-alanine + ADP + phosphate + H(+). It functions in the pathway cell wall biogenesis; peptidoglycan biosynthesis. Cell wall formation. In Anoxybacillus flavithermus (strain DSM 21510 / WK1), this protein is UDP-N-acetylmuramate--L-alanine ligase.